The chain runs to 375 residues: Alcohol dehydrogenase 1 (375 aa).

The residue at position 1 (serine 1) is an N-acetylserine. Zn(2+)-binding residues include cysteine 46, histidine 67, cysteine 97, cysteine 100, cysteine 103, cysteine 111, and cysteine 175. NAD(+) is bound by residues 200–205 (GLGGVG), aspartate 224, lysine 229, 293–295 (VGV), and arginine 370.

Belongs to the zinc-containing alcohol dehydrogenase family. Class-I subfamily. As to quaternary structure, homodimer. Zn(2+) serves as cofactor.

The protein resides in the cytoplasm. It carries out the reaction a primary alcohol + NAD(+) = an aldehyde + NADH + H(+). The catalysed reaction is a secondary alcohol + NAD(+) = a ketone + NADH + H(+). The chain is Alcohol dehydrogenase 1 (ADH1) from Coturnix japonica (Japanese quail).